We begin with the raw amino-acid sequence, 871 residues long: Speckle targeted PIP5K1A-regulated poly(A) polymerase (871 aa).

A Matrin-type zinc finger spans residues 16–46 (FRCCLCHITTANQPSLDAHLGGRKHRHLVEL). The region spanning 56 to 128 (RSVFVSGFPR…RRLRVRPREQ (73 aa)) is the RRM domain. S205 provides a ligand contact to ATP. Residues D216 and D218 each coordinate Mg(2+). Residues D216 and D218 each coordinate UTP. The disordered stretch occupies residues 252–321 (QALACTPASP…QEDQGDGDQG (70 aa)). The segment covering 259-269 (ASPPDSQPPAS) has biased composition (pro residues). N392 contributes to the ATP binding site. N392, R414, Y432, and H547 together coordinate UTP. The PAP-associated domain occupies 489–547 (LSSLLAQFFSCVSCWDLRGSLLSLREGQALSVAGGLPSNLSEGLRLGPMNLQDPFDLSH). A KA1; binds the bulging loops of U6 snRNA but is dispensable for terminal uridylyltransferase activity region spans residues 596 to 871 (SSPSSILSAT…LPQALRNLLK (276 aa)). The interval 636-684 (GTKRLRSEGGGPGEPPQGGTSKRAKLDGQKKSCEEGPEEQQGCAGEHGE) is disordered. Positions 659 to 669 (AKLDGQKKSCE) are enriched in basic and acidic residues. The residue at position 748 (S748) is a Phosphoserine.

It belongs to the DNA polymerase type-B-like family. As to quaternary structure, associates with the cleavage and polyadenylation specificity factor (CPSF) complex. Interacts with CPSF1 and CPSF3; the interaction is direct. Interacts with PIP5K1A. The cofactor is Mg(2+). It depends on Mn(2+) as a cofactor. In terms of processing, phosphorylated by CK1 in the proline-rich (Pro-rich) region.

The protein localises to the nucleus. The protein resides in the nucleolus. It localises to the nucleus speckle. The catalysed reaction is RNA(n) + UTP = RNA(n)-3'-uridine ribonucleotide + diphosphate. The enzyme catalyses RNA(n) + ATP = RNA(n)-3'-adenine ribonucleotide + diphosphate. Adenylyltransferase activity is specifically phosphatidylinositol 4,5-bisphosphate (PtdIns(4,5)P2). Its function is as follows. Poly(A) polymerase that creates the 3'-poly(A) tail of specific pre-mRNAs. Localizes to nuclear speckles together with PIP5K1A and mediates polyadenylation of a select set of mRNAs, such as HMOX1. In addition to polyadenylation, it is also required for the 3'-end cleavage of pre-mRNAs: binds to the 3'UTR of targeted pre-mRNAs and promotes the recruitment and assembly of the CPSF complex on the 3'UTR of pre-mRNAs. In addition to adenylyltransferase activity, also has uridylyltransferase activity. However, the ATP ratio is higher than UTP in cells, suggesting that it functions primarily as a poly(A) polymerase. Acts as a specific terminal uridylyltransferase for U6 snRNA in vitro: responsible for a controlled elongation reaction that results in the restoration of the four 3'-terminal UMP-residues found in newly transcribed U6 snRNA. Not involved in replication-dependent histone mRNA degradation. This Bos taurus (Bovine) protein is Speckle targeted PIP5K1A-regulated poly(A) polymerase (TUT1).